The chain runs to 179 residues: Adenine phosphoribosyltransferase (179 aa).

Belongs to the purine/pyrimidine phosphoribosyltransferase family. In terms of assembly, homodimer.

It localises to the cytoplasm. It carries out the reaction AMP + diphosphate = 5-phospho-alpha-D-ribose 1-diphosphate + adenine. The protein operates within purine metabolism; AMP biosynthesis via salvage pathway; AMP from adenine: step 1/1. Catalyzes a salvage reaction resulting in the formation of AMP, that is energically less costly than de novo synthesis. The chain is Adenine phosphoribosyltransferase from Ruegeria pomeroyi (strain ATCC 700808 / DSM 15171 / DSS-3) (Silicibacter pomeroyi).